An 804-amino-acid chain; its full sequence is Leucine--tRNA ligase (804 aa).

Positions Pro40–His51 match the 'HIGH' region motif. Positions Lys576–Ser580 match the 'KMSKS' region motif. ATP is bound at residue Lys579.

The protein belongs to the class-I aminoacyl-tRNA synthetase family.

It is found in the cytoplasm. It carries out the reaction tRNA(Leu) + L-leucine + ATP = L-leucyl-tRNA(Leu) + AMP + diphosphate. This is Leucine--tRNA ligase from Staphylococcus aureus (strain Mu3 / ATCC 700698).